We begin with the raw amino-acid sequence, 500 residues long: uncharacterized protein (500 aa).

Residues 27–47 (IFALILIVFGFIIAPLLPGIF) traverse the membrane as a helical segment.

The protein resides in the membrane. This is an uncharacterized protein from Borreliella burgdorferi (strain ATCC 35210 / DSM 4680 / CIP 102532 / B31) (Borrelia burgdorferi).